The following is a 364-amino-acid chain: Aminomethyltransferase (364 aa).

This sequence belongs to the GcvT family. In terms of assembly, the glycine cleavage system is composed of four proteins: P, T, L and H.

It carries out the reaction N(6)-[(R)-S(8)-aminomethyldihydrolipoyl]-L-lysyl-[protein] + (6S)-5,6,7,8-tetrahydrofolate = N(6)-[(R)-dihydrolipoyl]-L-lysyl-[protein] + (6R)-5,10-methylene-5,6,7,8-tetrahydrofolate + NH4(+). In terms of biological role, the glycine cleavage system catalyzes the degradation of glycine. This chain is Aminomethyltransferase, found in Shigella flexneri serotype 5b (strain 8401).